Consider the following 614-residue polypeptide: MKKYDVIVIGAGHAGLEAAFATSNLNLQTALITLDEKGIGMMPCNPSIGGPAKGIVTREIDALGGIQGKAADATTMQMKILNSSKGPGVWAIRAQIDKIAYQRWFKQQIKQQKNLDLIIAEVSDLLVENNIVKGVILSDQKIIQADYVIITTGTYLKSITHRGSVCVDEGADGTKNAKFLSDVLVKLGFELIRLKTGTPARIKKDSIDFTNMVLEPGTNQKIAFSHYHPVYKPYDKQLPCHIIYTNEQTHQIIRENLNKSAMYGGMISGIGPRYCPSIEDKIVKFSEKPRHQIFVEPESYELDSMYLGGFSTSMPIDVQEKMIRSLPGLEDCEILKYAYAIEYDAIDPTQLYPSLESKLVNNLFFAGQINGTSGYEEAAAQGLMAAINVSQKHKNKEPIVLGRDQAYIGVMIDDIVTKGVVEPYRLLTSRAEHRLALRNDNADDRLMKIGFEIGLLKPEVYDQYLNNLKQINEVLNWLKTTTVGQIDDLKFTTLKTNSYLIDYLKRPEVKLNDLLIYCPIKIEDEQIINKVQIQVKFEGYIKNQEENLKQLKRLNNIKLHGIVDYKEVPNISLETIDKLNKIKPLDLEQASRISGVNLTDIAMIKYYLERIKND.

An FAD-binding site is contributed by 10–15 (GAGHAG). 271–285 (GPRYCPSIEDKIVKF) is a binding site for NAD(+).

Belongs to the MnmG family. Homodimer. Heterotetramer of two MnmE and two MnmG subunits. FAD is required as a cofactor.

It is found in the cytoplasm. NAD-binding protein involved in the addition of a carboxymethylaminomethyl (cmnm) group at the wobble position (U34) of certain tRNAs, forming tRNA-cmnm(5)s(2)U34. The sequence is that of tRNA uridine 5-carboxymethylaminomethyl modification enzyme MnmG from Ureaplasma urealyticum serovar 10 (strain ATCC 33699 / Western).